Here is a 437-residue protein sequence, read N- to C-terminus: Trigger factor (437 aa).

The region spanning 165-251 is the PPIase FKBP-type domain; the sequence is GDLVVIDFKG…LHTIKEKEKI (87 aa).

Belongs to the FKBP-type PPIase family. Tig subfamily.

It is found in the cytoplasm. The catalysed reaction is [protein]-peptidylproline (omega=180) = [protein]-peptidylproline (omega=0). Functionally, involved in protein export. Acts as a chaperone by maintaining the newly synthesized protein in an open conformation. Functions as a peptidyl-prolyl cis-trans isomerase. This chain is Trigger factor, found in Nitratiruptor sp. (strain SB155-2).